The primary structure comprises 480 residues: UDP-N-acetylmuramate--L-alanine ligase (480 aa).

129–135 (GSHGKTT) lines the ATP pocket.

It belongs to the MurCDEF family.

The protein resides in the cytoplasm. The catalysed reaction is UDP-N-acetyl-alpha-D-muramate + L-alanine + ATP = UDP-N-acetyl-alpha-D-muramoyl-L-alanine + ADP + phosphate + H(+). The protein operates within cell wall biogenesis; peptidoglycan biosynthesis. In terms of biological role, cell wall formation. This is UDP-N-acetylmuramate--L-alanine ligase from Syntrophus aciditrophicus (strain SB).